A 239-amino-acid chain; its full sequence is Ribosomal RNA small subunit methyltransferase G (239 aa).

S-adenosyl-L-methionine is bound by residues Gly-78, Phe-83, 129-130, and Arg-148; that span reads AE.

This sequence belongs to the methyltransferase superfamily. RNA methyltransferase RsmG family.

The protein resides in the cytoplasm. Its function is as follows. Specifically methylates the N7 position of a guanine in 16S rRNA. The polypeptide is Ribosomal RNA small subunit methyltransferase G (Alkaliphilus metalliredigens (strain QYMF)).